A 119-amino-acid polypeptide reads, in one-letter code: Protein MRP-126 (119 aa).

EF-hand domains lie at D23–V58 and K59–A94. Ca(2+)-binding residues include T37, E42, D72, N74, D76, Q78, and E83.

This sequence belongs to the S-100 family. Expressed in v-myb-transformed myelomonocytic cells.

The sequence is that of Protein MRP-126 from Gallus gallus (Chicken).